Consider the following 216-residue polypeptide: Lipoprotein signal peptidase (216 aa).

Residues 1–21 (MATSRTAPTRAPSLRSSPALE) are disordered. A run of 3 helical transmembrane segments spans residues 31–51 (VGALVILAVVALCVYLMDQIT), 89–109 (GSTWIFSLVGVGVLGFVIWYA), and 114–134 (STAWAILFGLLLGGLLGNLTD). Catalysis depends on residues Asp-149 and Asp-164. The helical transmembrane segment at 159–179 (IFNLADVAIVFSMGLFLLLTL) threads the bilayer. Positions 189 to 216 (QRDEGAGVSSASPAGDESAADKPENLSA) are disordered. Residues 207–216 (AADKPENLSA) are compositionally biased toward basic and acidic residues.

This sequence belongs to the peptidase A8 family.

Its subcellular location is the cell membrane. It catalyses the reaction Release of signal peptides from bacterial membrane prolipoproteins. Hydrolyzes -Xaa-Yaa-Zaa-|-(S,diacylglyceryl)Cys-, in which Xaa is hydrophobic (preferably Leu), and Yaa (Ala or Ser) and Zaa (Gly or Ala) have small, neutral side chains.. The protein operates within protein modification; lipoprotein biosynthesis (signal peptide cleavage). In terms of biological role, this protein specifically catalyzes the removal of signal peptides from prolipoproteins. The protein is Lipoprotein signal peptidase of Leifsonia xyli subsp. xyli (strain CTCB07).